A 209-amino-acid polypeptide reads, in one-letter code: Pyroglutamyl-peptidase 1 (209 aa).

Active-site residues include glutamate 85, cysteine 149, and histidine 168.

It belongs to the peptidase C15 family. As to quaternary structure, monomer.

It localises to the cytoplasm. It catalyses the reaction Release of an N-terminal pyroglutamyl group from a polypeptide, the second amino acid generally not being Pro.. Removes 5-oxoproline from various penultimate amino acid residues except L-proline. This Rattus norvegicus (Rat) protein is Pyroglutamyl-peptidase 1 (Pgpep1).